Reading from the N-terminus, the 363-residue chain is Phosphoserine aminotransferase (363 aa).

L-glutamate is bound at residue Arg42. Pyridoxal 5'-phosphate contacts are provided by residues 76 to 77 (GR), Trp102, Thr156, Asp175, and Gln198. Position 199 is an N6-(pyridoxal phosphate)lysine (Lys199). 240 to 241 (NT) contributes to the pyridoxal 5'-phosphate binding site.

Belongs to the class-V pyridoxal-phosphate-dependent aminotransferase family. SerC subfamily. As to quaternary structure, homodimer. Pyridoxal 5'-phosphate is required as a cofactor.

It is found in the cytoplasm. The enzyme catalyses O-phospho-L-serine + 2-oxoglutarate = 3-phosphooxypyruvate + L-glutamate. The catalysed reaction is 4-(phosphooxy)-L-threonine + 2-oxoglutarate = (R)-3-hydroxy-2-oxo-4-phosphooxybutanoate + L-glutamate. The protein operates within amino-acid biosynthesis; L-serine biosynthesis; L-serine from 3-phospho-D-glycerate: step 2/3. It functions in the pathway cofactor biosynthesis; pyridoxine 5'-phosphate biosynthesis; pyridoxine 5'-phosphate from D-erythrose 4-phosphate: step 3/5. Functionally, catalyzes the reversible conversion of 3-phosphohydroxypyruvate to phosphoserine and of 3-hydroxy-2-oxo-4-phosphonooxybutanoate to phosphohydroxythreonine. In Shewanella baltica (strain OS195), this protein is Phosphoserine aminotransferase.